Consider the following 150-residue polypeptide: UPF0178 protein PP_5221 (150 aa).

This sequence belongs to the UPF0178 family.

In Pseudomonas putida (strain ATCC 47054 / DSM 6125 / CFBP 8728 / NCIMB 11950 / KT2440), this protein is UPF0178 protein PP_5221.